A 139-amino-acid polypeptide reads, in one-letter code: Nucleoside diphosphate kinase (139 aa).

ATP contacts are provided by Lys11, Phe59, Arg87, Thr93, Arg104, and Asn114. His117 functions as the Pros-phosphohistidine intermediate in the catalytic mechanism.

It belongs to the NDK family. In terms of assembly, homotetramer. Mg(2+) is required as a cofactor.

The protein localises to the cytoplasm. The enzyme catalyses a 2'-deoxyribonucleoside 5'-diphosphate + ATP = a 2'-deoxyribonucleoside 5'-triphosphate + ADP. The catalysed reaction is a ribonucleoside 5'-diphosphate + ATP = a ribonucleoside 5'-triphosphate + ADP. Its function is as follows. Major role in the synthesis of nucleoside triphosphates other than ATP. The ATP gamma phosphate is transferred to the NDP beta phosphate via a ping-pong mechanism, using a phosphorylated active-site intermediate. The chain is Nucleoside diphosphate kinase from Wolbachia pipientis wMel.